The chain runs to 221 residues: Holliday junction branch migration complex subunit RuvA (221 aa).

The interval 1–61 (MQIYQFGKIV…DYTKITYGFA (61 aa)) is domain I. Residues 62-139 (SFRERILFED…RFNENHKNQT (78 aa)) form a domain II region. Residues 133–155 (ENHKNQTEETNQDSQEKELEKKD) are disordered. Residues 140–166 (EETNQDSQEKELEKKDDLADITIQKSN) are flexible linker. A compositionally biased stretch (basic and acidic residues) spans 146–155 (SQEKELEKKD). The domain III stretch occupies residues 167–221 (LEDKTAANLEDTLKMLGFKPRQIDYALTKVEPNENFENLIENAIKIISNAREFRN).

Belongs to the RuvA family. In terms of assembly, homotetramer. Forms an RuvA(8)-RuvB(12)-Holliday junction (HJ) complex. HJ DNA is sandwiched between 2 RuvA tetramers; dsDNA enters through RuvA and exits via RuvB. An RuvB hexamer assembles on each DNA strand where it exits the tetramer. Each RuvB hexamer is contacted by two RuvA subunits (via domain III) on 2 adjacent RuvB subunits; this complex drives branch migration. In the full resolvosome a probable DNA-RuvA(4)-RuvB(12)-RuvC(2) complex forms which resolves the HJ.

The protein resides in the cytoplasm. The RuvA-RuvB-RuvC complex processes Holliday junction (HJ) DNA during genetic recombination and DNA repair, while the RuvA-RuvB complex plays an important role in the rescue of blocked DNA replication forks via replication fork reversal (RFR). RuvA specifically binds to HJ cruciform DNA, conferring on it an open structure. The RuvB hexamer acts as an ATP-dependent pump, pulling dsDNA into and through the RuvAB complex. HJ branch migration allows RuvC to scan DNA until it finds its consensus sequence, where it cleaves and resolves the cruciform DNA. This is Holliday junction branch migration complex subunit RuvA from Mesomycoplasma hyopneumoniae (strain J / ATCC 25934 / NCTC 10110) (Mycoplasma hyopneumoniae).